Here is an 81-residue protein sequence, read N- to C-terminus: Dermaseptin-S6 (81 aa).

Residues 1–22 (MDILKKSLFFILFLGLVSLSIS) form the signal peptide. A disordered region spans residues 22–49 (SEEEKRENEDEEDQEDDEQSEEKRGLWS). Positions 23–45 (EEEKRENEDEEDQEDDEQSEEKR) are excised as a propeptide. A compositionally biased stretch (acidic residues) spans 30-41 (EDEEDQEDDEQS). Isoleucine 78 is subject to Isoleucine amide. The propeptide occupies 80 to 81 (EQ).

The protein belongs to the frog skin active peptide (FSAP) family. Dermaseptin subfamily. In terms of tissue distribution, expressed by the skin glands.

It localises to the secreted. Functionally, antimicrobial peptide. This is Dermaseptin-S6 from Phyllomedusa sauvagei (Sauvage's leaf frog).